Reading from the N-terminus, the 404-residue chain is Arginine biosynthesis bifunctional protein ArgJ (404 aa).

T166, K189, T200, E280, N399, and S404 together coordinate substrate. The active-site Nucleophile is the T200.

It belongs to the ArgJ family. In terms of assembly, heterotetramer of two alpha and two beta chains.

Its subcellular location is the cytoplasm. The enzyme catalyses N(2)-acetyl-L-ornithine + L-glutamate = N-acetyl-L-glutamate + L-ornithine. The catalysed reaction is L-glutamate + acetyl-CoA = N-acetyl-L-glutamate + CoA + H(+). The protein operates within amino-acid biosynthesis; L-arginine biosynthesis; L-ornithine and N-acetyl-L-glutamate from L-glutamate and N(2)-acetyl-L-ornithine (cyclic): step 1/1. Its pathway is amino-acid biosynthesis; L-arginine biosynthesis; N(2)-acetyl-L-ornithine from L-glutamate: step 1/4. Catalyzes two activities which are involved in the cyclic version of arginine biosynthesis: the synthesis of N-acetylglutamate from glutamate and acetyl-CoA as the acetyl donor, and of ornithine by transacetylation between N(2)-acetylornithine and glutamate. The protein is Arginine biosynthesis bifunctional protein ArgJ of Mycobacterium bovis (strain ATCC BAA-935 / AF2122/97).